Consider the following 122-residue polypeptide: Small ribosomal subunit protein uS13 (122 aa).

The segment at 91–122 is disordered; sequence RHRRGLPVHGQRTKTNARTRKGPKRTVAGKKK.

It belongs to the universal ribosomal protein uS13 family. In terms of assembly, part of the 30S ribosomal subunit. Forms a loose heterodimer with protein S19. Forms two bridges to the 50S subunit in the 70S ribosome.

In terms of biological role, located at the top of the head of the 30S subunit, it contacts several helices of the 16S rRNA. In the 70S ribosome it contacts the 23S rRNA (bridge B1a) and protein L5 of the 50S subunit (bridge B1b), connecting the 2 subunits; these bridges are implicated in subunit movement. Contacts the tRNAs in the A and P-sites. In Kocuria rhizophila (strain ATCC 9341 / DSM 348 / NBRC 103217 / DC2201), this protein is Small ribosomal subunit protein uS13.